We begin with the raw amino-acid sequence, 178 residues long: MAVFEGTYQVLGTPRFGIVISRFNDLITTKLLEGCQDCLRRHGVDPNPHGSQVDYAWVPGSFEIPLVAAQLAATRRYAAIICLGAVIRGQTPHFDYVAAEVTKGIATASMQTGVPIIYGILTTDTMQQALERAGIKSNKGWEYALNALEMANLMQTLPSAINPPTTKLSSSTRILTDG.

Residues F23, 61 to 63, and 85 to 87 contribute to the 5-amino-6-(D-ribitylamino)uracil site; these read SFE and AVI. Position 90–91 (90–91) interacts with (2S)-2-hydroxy-3-oxobutyl phosphate; it reads QT. H93 functions as the Proton donor in the catalytic mechanism. Position 118 (Y118) interacts with 5-amino-6-(D-ribitylamino)uracil. R132 provides a ligand contact to (2S)-2-hydroxy-3-oxobutyl phosphate.

The protein belongs to the DMRL synthase family.

It catalyses the reaction (2S)-2-hydroxy-3-oxobutyl phosphate + 5-amino-6-(D-ribitylamino)uracil = 6,7-dimethyl-8-(1-D-ribityl)lumazine + phosphate + 2 H2O + H(+). It participates in cofactor biosynthesis; riboflavin biosynthesis; riboflavin from 2-hydroxy-3-oxobutyl phosphate and 5-amino-6-(D-ribitylamino)uracil: step 1/2. Catalyzes the formation of 6,7-dimethyl-8-ribityllumazine by condensation of 5-amino-6-(D-ribitylamino)uracil with 3,4-dihydroxy-2-butanone 4-phosphate. This is the penultimate step in the biosynthesis of riboflavin. This chain is 6,7-dimethyl-8-ribityllumazine synthase, found in Thermosynechococcus vestitus (strain NIES-2133 / IAM M-273 / BP-1).